Reading from the N-terminus, the 138-residue chain is Endoribonuclease YbeY (138 aa).

Residues H106, H110, and D116 each coordinate Zn(2+).

The protein belongs to the endoribonuclease YbeY family. It depends on Zn(2+) as a cofactor.

It localises to the cytoplasm. Functionally, single strand-specific metallo-endoribonuclease involved in late-stage 70S ribosome quality control and in maturation of the 3' terminus of the 16S rRNA. The chain is Endoribonuclease YbeY from Phocaeicola vulgatus (strain ATCC 8482 / DSM 1447 / JCM 5826 / CCUG 4940 / NBRC 14291 / NCTC 11154) (Bacteroides vulgatus).